A 282-amino-acid polypeptide reads, in one-letter code: Heterogeneous nuclear ribonucleoprotein C (282 aa).

An RRM domain is found at 17-88 (SRVFIGNLNT…QVLDINLAAE (72 aa)). Disordered stretches follow at residues 131-177 (APPP…RLKG) and 208-282 (QSKQ…EEDS). Positions 141–147 (PSKRQRV) match the Nuclear localization signal motif. The span at 161–172 (SKSGQRGGSSKS) shows a compositional bias: low complexity. Residues 177–217 (GDDLQAIKKELSQIKQRVDSLLENLERIERDQSKQDTKLDD) adopt a coiled-coil conformation. Composition is skewed to basic and acidic residues over residues 208–217 (QSKQDTKLDD) and 224–235 (LKKEETGVKLIE). Composition is skewed to acidic residues over residues 236–257 (ETGDSAEEGDLLDDDEQGEDTL) and 265–282 (KETEEGEDEGDSANEEDS).

The protein belongs to the RRM HNRPC family. RALY subfamily. In terms of assembly, tetramer.

Its subcellular location is the nucleus. Binds pre-mRNA and nucleates the assembly of 40S hnRNP particles. Interacts with poly-U tracts in the 3'-UTR or 5'-UTR of mRNA and modulates the stability and the level of translation of bound mRNA molecules. Single HNRNPC tetramers bind 230-240 nucleotides. Trimers of HNRNPC tetramers bind 700 nucleotides. May play a role in the early steps of spliceosome assembly and pre-mRNA splicing. N6-methyladenosine (m6A) has been shown to alter the local structure in mRNAs and long non-coding RNAs (lncRNAs) via a mechanism named 'm(6)A-switch', facilitating binding of HNRNPC, leading to regulation of mRNA splicing. The chain is Heterogeneous nuclear ribonucleoprotein C (hnrnpc) from Xenopus laevis (African clawed frog).